A 92-amino-acid chain; its full sequence is Small ribosomal subunit protein uS19 (92 aa).

It belongs to the universal ribosomal protein uS19 family. As to quaternary structure, part of the 30S ribosomal subunit.

Protein S19 forms a complex with S13 that binds strongly to the 16S ribosomal RNA. The protein is Small ribosomal subunit protein uS19 (rpsS) of Bacillus subtilis (strain 168).